The primary structure comprises 648 residues: Protein KASH5 (648 aa).

The Cytoplasmic segment spans residues 1-606 (MHSILRSSLS…HSPGIRISQH (606 aa)). The segment at 206 to 228 (PEAEESANLESFGGEDPRPEGPA) is disordered. A coiled-coil region spans residues 230-420 (AELLSNLEDL…EEQLSQSQEG (191 aa)). Over residues 473–497 (EVEPEPEPEPEPEPEPEPQEVEFPS) the composition is skewed to acidic residues. A disordered region spans residues 473–545 (EVEPEPEPEP…EESWVLADPS (73 aa)). The helical; Anchor for type IV membrane protein transmembrane segment at 607 to 627 (PLVPTPVLGLLLLLLLSILLF) threads the bilayer. Topologically, residues 628–648 (SQSPPPTWPHLQLYYLQPPPV) are perinuclear space.

Core component the LINC complex which is composed of inner nuclear membrane SUN domain-containing proteins coupled to outer nuclear membrane KASH domain-containing nesprins. SUN and KASH domain-containing proteins seem to bind each other promiscuously; however, differentially expression of LINC complex constituents is giving rise to specific assemblies. At least SUN1/2-containing core LINC complexes are proposed to be hexameric composed of three protomers of each KASH and SUN domain-containing protein. Interacts with SUN1; this interaction mediates its telomere localization by forming a SUN1:KASH5 LINC complex. Component of a probable SUN2:KASH5 LINC complex. Self-associates. Interacts with DYNC1H1, DCTN1, DYNC1I1/2 and PAFAH1B1; suggesting the association with the dynein-dynactin motor complex. Restricted to the testis and the early ootidogenesis ovary. Expressed in spermatocytes and oocytes (at protein level).

It localises to the nucleus outer membrane. Its subcellular location is the nucleus. The protein localises to the chromosome. The protein resides in the telomere. It is found in the nucleus envelope. Its function is as follows. As a component of the LINC (LInker of Nucleoskeleton and Cytoskeleton) complex, involved in the connection between the nuclear lamina and the cytoskeleton. The nucleocytoplasmic interactions established by the LINC complex play an important role in the transmission of mechanical forces across the nuclear envelope and in nuclear movement and positioning. Required for telomere attachment to nuclear envelope in the prophase of meiosis and for rapid telomere prophase movements implicating a SUN1/2:KASH5 LINC complex in which SUN1 and SUN2 seem to act at least partial redundantly. Required for homolog pairing during meiotic prophase in spermatocytes and probably oocytes. Essential for male and female gametogenesis. Recruits cytoplasmic dynein to telomere attachment sites at the nuclear envelope in spermatocytes. In oocytes is involved in meiotic resumption and spindle formation. In Mus musculus (Mouse), this protein is Protein KASH5.